We begin with the raw amino-acid sequence, 893 residues long: Protein kintoun (893 aa).

5 disordered regions span residues 211–243 (KNAT…VLPM), 372–395 (LSRE…EEAG), 587–719 (EQVH…SIDD), 781–821 (QRKK…QQTA), and 834–893 (PQNN…DEDM). Residues 214–232 (TAEEREPHPLEHTYPKKPE) show a composition bias toward basic and acidic residues. Phosphoserine is present on serine 377. The segment covering 594-603 (QQEEEEEEEQ) has biased composition (acidic residues). Residues 609 to 626 (HQHKKGNKKQRKRNKKQR) are compositionally biased toward basic residues. Residues 640-651 (QQQQHQKQQQQQ) show a composition bias toward low complexity. 2 stretches are compositionally biased toward polar residues: residues 656 to 667 (ENSSPESLNAGS) and 684 to 694 (FSECNDSSSVQ). Positions 709-719 (SISESSSSIDD) are enriched in low complexity. The span at 781-797 (QRKKNQKRRDCKLRAQQ) shows a compositional bias: basic residues. Serine 801 carries the phosphoserine modification. Residues 836–848 (NNNNRSYSKNNKN) are compositionally biased toward low complexity. The span at 865–877 (NNEEDTKRNEADA) shows a compositional bias: basic and acidic residues. The span at 884-893 (EMDDDDDEDM) shows a compositional bias: acidic residues.

It belongs to the PIH1 family. Kintoun subfamily. In terms of assembly, interacts with Pp1alpha-96A, Pp1-87B, Pp1-13C and flw.

It is found in the cytoplasm. Its function is as follows. Required for cytoplasmic pre-assembly of axonemal dyneins, thereby playing a central role in motility in cilia and flagella. Involved in pre-assembly of dynein arm complexes in the cytoplasm before intraflagellar transport loads them for the ciliary compartment. The polypeptide is Protein kintoun (Drosophila grimshawi (Hawaiian fruit fly)).